The sequence spans 179 residues: Large ribosomal subunit protein uL5 (179 aa).

This sequence belongs to the universal ribosomal protein uL5 family. Part of the 50S ribosomal subunit; part of the 5S rRNA/L5/L18/L25 subcomplex. Contacts the 5S rRNA and the P site tRNA. Forms a bridge to the 30S subunit in the 70S ribosome.

This is one of the proteins that bind and probably mediate the attachment of the 5S RNA into the large ribosomal subunit, where it forms part of the central protuberance. In the 70S ribosome it contacts protein S13 of the 30S subunit (bridge B1b), connecting the 2 subunits; this bridge is implicated in subunit movement. Contacts the P site tRNA; the 5S rRNA and some of its associated proteins might help stabilize positioning of ribosome-bound tRNAs. The polypeptide is Large ribosomal subunit protein uL5 (Geobacillus sp. (strain WCH70)).